Here is a 75-residue protein sequence, read N- to C-terminus: UPF0291 protein Teth39_0326 (75 aa).

Belongs to the UPF0291 family.

The protein localises to the cytoplasm. This chain is UPF0291 protein Teth39_0326, found in Thermoanaerobacter pseudethanolicus (strain ATCC 33223 / 39E) (Clostridium thermohydrosulfuricum).